Consider the following 405-residue polypeptide: Phosphoglycerate kinase (405 aa).

Substrate contacts are provided by residues 21–23, Arg-36, 59–62, Arg-119, and Arg-161; these read DFN and HLGR. ATP is bound by residues Lys-212, Gly-301, Glu-332, and 361–364; that span reads GGDS.

The protein belongs to the phosphoglycerate kinase family. Monomer.

The protein resides in the cytoplasm. The enzyme catalyses (2R)-3-phosphoglycerate + ATP = (2R)-3-phospho-glyceroyl phosphate + ADP. The protein operates within carbohydrate degradation; glycolysis; pyruvate from D-glyceraldehyde 3-phosphate: step 2/5. This Leuconostoc mesenteroides subsp. mesenteroides (strain ATCC 8293 / DSM 20343 / BCRC 11652 / CCM 1803 / JCM 6124 / NCDO 523 / NBRC 100496 / NCIMB 8023 / NCTC 12954 / NRRL B-1118 / 37Y) protein is Phosphoglycerate kinase.